The sequence spans 351 residues: Methylthioribose-1-phosphate isomerase (351 aa).

Substrate-binding positions include 55 to 57 (RGA), R95, and Q202. Catalysis depends on D243, which acts as the Proton donor. 253–254 (NK) contributes to the substrate binding site.

The protein belongs to the eIF-2B alpha/beta/delta subunits family. MtnA subfamily.

It carries out the reaction 5-(methylsulfanyl)-alpha-D-ribose 1-phosphate = 5-(methylsulfanyl)-D-ribulose 1-phosphate. The protein operates within amino-acid biosynthesis; L-methionine biosynthesis via salvage pathway; L-methionine from S-methyl-5-thio-alpha-D-ribose 1-phosphate: step 1/6. In terms of biological role, catalyzes the interconversion of methylthioribose-1-phosphate (MTR-1-P) into methylthioribulose-1-phosphate (MTRu-1-P). In Marinobacter nauticus (strain ATCC 700491 / DSM 11845 / VT8) (Marinobacter aquaeolei), this protein is Methylthioribose-1-phosphate isomerase.